The primary structure comprises 245 residues: tRNA pseudouridine synthase A (245 aa).

Asp-52 acts as the Nucleophile in catalysis. Tyr-111 contacts substrate.

It belongs to the tRNA pseudouridine synthase TruA family. In terms of assembly, homodimer.

It carries out the reaction uridine(38/39/40) in tRNA = pseudouridine(38/39/40) in tRNA. Its function is as follows. Formation of pseudouridine at positions 38, 39 and 40 in the anticodon stem and loop of transfer RNAs. This is tRNA pseudouridine synthase A from Ehrlichia chaffeensis (strain ATCC CRL-10679 / Arkansas).